A 395-amino-acid chain; its full sequence is Cystathionine beta-lyase (395 aa).

Lys-210 is subject to N6-(pyridoxal phosphate)lysine.

The protein belongs to the trans-sulfuration enzymes family. Homotetramer. The cofactor is pyridoxal 5'-phosphate.

It is found in the cytoplasm. It catalyses the reaction L,L-cystathionine + H2O = L-homocysteine + pyruvate + NH4(+). It carries out the reaction an S-substituted L-cysteine + H2O = a thiol + pyruvate + NH4(+). The protein operates within amino-acid biosynthesis; L-methionine biosynthesis via de novo pathway; L-homocysteine from L-cystathionine: step 1/1. Functionally, catalyzes the cleavage of cystathionine to homocysteine, pyruvate and ammonia during methionine biosynthesis. In Salmonella typhimurium (strain LT2 / SGSC1412 / ATCC 700720), this protein is Cystathionine beta-lyase (metC).